The chain runs to 104 residues: uncharacterized protein (104 aa).

This is an uncharacterized protein from Acidianus two-tailed virus (ATV).